The following is a 342-amino-acid chain: tRNA (guanine(26)-N(2))-dimethyltransferase (342 aa).

A Trm1 methyltransferase domain is found at 1 to 336; the sequence is MRITEGSAVI…CPYAEVSEIL (336 aa). 3 residues coordinate S-adenosyl-L-methionine: R35, R60, and E76.

The protein belongs to the class I-like SAM-binding methyltransferase superfamily. Trm1 family.

It catalyses the reaction guanosine(26) in tRNA + 2 S-adenosyl-L-methionine = N(2)-dimethylguanosine(26) in tRNA + 2 S-adenosyl-L-homocysteine + 2 H(+). Its function is as follows. Dimethylates a single guanine residue at position 26 of a number of tRNAs using S-adenosyl-L-methionine as donor of the methyl groups. The protein is tRNA (guanine(26)-N(2))-dimethyltransferase of Thermoplasma volcanium (strain ATCC 51530 / DSM 4299 / JCM 9571 / NBRC 15438 / GSS1).